The following is a 440-amino-acid chain: Glutamate-1-semialdehyde 2,1-aminomutase (440 aa).

Lysine 271 carries the post-translational modification N6-(pyridoxal phosphate)lysine.

This sequence belongs to the class-III pyridoxal-phosphate-dependent aminotransferase family. HemL subfamily. As to quaternary structure, homodimer. It depends on pyridoxal 5'-phosphate as a cofactor.

The protein resides in the cytoplasm. The enzyme catalyses (S)-4-amino-5-oxopentanoate = 5-aminolevulinate. It participates in porphyrin-containing compound metabolism; protoporphyrin-IX biosynthesis; 5-aminolevulinate from L-glutamyl-tRNA(Glu): step 2/2. The protein is Glutamate-1-semialdehyde 2,1-aminomutase of Chlamydia pneumoniae (Chlamydophila pneumoniae).